Here is a 91-residue protein sequence, read N- to C-terminus: Small ribosomal subunit protein bS16 (91 aa).

It belongs to the bacterial ribosomal protein bS16 family.

This is Small ribosomal subunit protein bS16 from Staphylococcus haemolyticus (strain JCSC1435).